Reading from the N-terminus, the 174-residue chain is DNA-directed RNA polymerase IV subunit 7 (174 aa).

It belongs to the eukaryotic RPB7/RPC8 RNA polymerase subunit family. In terms of assembly, component of the RNA polymerase IV complex. Interacts with NRPD1.

Its subcellular location is the nucleus. Its function is as follows. DNA-dependent RNA polymerase catalyzes the transcription of DNA into RNA using the four ribonucleoside triphosphates as substrates. Component of RNA polymerase IV which mediates 24-nt short-interfering RNAs (siRNA) accumulation. Implicated in siRNA-directed heterochromatin formation through the action of DCL3 and AGO4, and subsequent DNA methylation-dependent silencing of targeted sequences. Essential component of a self-reinforcing loop coupling de novo DNA methylation to siRNA production. Required for intercellular but not intracellular RNA interference (RNAi) leading to systemic post-transcriptional gene silencing. Involved in the maintenance of post-transcriptional RNA silencing. The sequence is that of DNA-directed RNA polymerase IV subunit 7 (NRPD7) from Arabidopsis thaliana (Mouse-ear cress).